The primary structure comprises 96 residues: Cystatin (96 aa).

Residues 22-65 (DFIKAALNETGTHAGRKYKVLRSSQQVVAGMKYTFYIVFEDDES) form the Cystatin domain. Asparagine 29 carries N-linked (GlcNAc...) asparagine glycosylation.

This sequence belongs to the cystatin family. In terms of assembly, interacts with cathepsin L-like peptidase; the interaction results in inhibition of cathepsin L-like peptidase activity. In terms of tissue distribution, salivary gland. Midgut.

In terms of biological role, cysteine proteinase inhibitor. Inhibits cathepsin L-like peptidase. Increases cell viability following apoptosis induction by staurosporine. Inhibits human cathepsin S (CTSS), human cathepsin L2 (CTSV), human cathepsin L (CTSL), human cathepsin B (CTSB) and papain. (Microbial infection) Modulates dengue virus type 2 replication in salivary glands. This chain is Cystatin, found in Aedes aegypti (Yellowfever mosquito).